The chain runs to 202 residues: Nascent polypeptide-associated complex subunit alpha (202 aa).

Over residues 1–19 the composition is skewed to basic and acidic residues; sequence MADPRVEELPDEEVPKTNV. A disordered region spans residues 1 to 42; the sequence is MADPRVEELPDEEVPKTNVEDAGSSSESEAGDEPTIPGGAAV. The NAC-A/B domain maps to 46-111; sequence SRNEKKARKA…AKIEDLNATA (66 aa). Positions 117–126 are enriched in low complexity; sequence QQLAEAAANE. A disordered region spans residues 117 to 165; sequence QQLAEAAANEHAGHDHEHDHGKGKAPEAEAKKEEEEDDGEEVDESGLEA. The span at 127-149 shows a compositional bias: basic and acidic residues; sequence HAGHDHEHDHGKGKAPEAEAKKE. Positions 150–162 are enriched in acidic residues; sequence EEEDDGEEVDESG. The 40-residue stretch at 163–202 folds into the UBA domain; it reads LEAKDIELVMAQANVSRKKAVKALRENDNDIVNSIMALSI.

Belongs to the NAC-alpha family. As to quaternary structure, part of the nascent polypeptide-associated complex (NAC), consisting of egd2 and egd1. NAC associates with ribosomes via egd1.

Its subcellular location is the cytoplasm. It is found in the nucleus. In terms of biological role, component of the nascent polypeptide-associated complex (NAC), a dynamic component of the ribosomal exit tunnel, protecting the emerging polypeptides from interaction with other cytoplasmic proteins to ensure appropriate nascent protein targeting. The NAC complex also promotes mitochondrial protein import by enhancing productive ribosome interactions with the outer mitochondrial membrane and blocks the inappropriate interaction of ribosomes translating non-secretory nascent polypeptides with translocation sites in the membrane of the endoplasmic reticulum. Egd2 may also be involved in transcription regulation. This Aspergillus niger (strain ATCC MYA-4892 / CBS 513.88 / FGSC A1513) protein is Nascent polypeptide-associated complex subunit alpha (egd2).